A 241-amino-acid polypeptide reads, in one-letter code: Probable transcriptional regulatory protein Maqu_2154 (241 aa).

It belongs to the TACO1 family.

Its subcellular location is the cytoplasm. In Marinobacter nauticus (strain ATCC 700491 / DSM 11845 / VT8) (Marinobacter aquaeolei), this protein is Probable transcriptional regulatory protein Maqu_2154.